Here is a 142-residue protein sequence, read N- to C-terminus: uncharacterized protein (142 aa).

A helical membrane pass occupies residues 75–91 (YAAILAQVSFAFLCTGF).

The protein localises to the membrane. This is an uncharacterized protein from Haemophilus influenzae (strain ATCC 51907 / DSM 11121 / KW20 / Rd).